The primary structure comprises 85 residues: uncharacterized protein (85 aa).

It localises to the mitochondrion. This is an uncharacterized protein from Paramecium tetraurelia.